The following is a 506-amino-acid chain: NAD(P)H-quinone oxidoreductase subunit 2 (506 aa).

13 helical membrane-spanning segments follow: residues 14 to 34, 42 to 62, 79 to 99, 108 to 128, 132 to 152, 167 to 187, 206 to 226, 240 to 260, 276 to 296, 302 to 322, 330 to 350, 374 to 394, and 409 to 429; these read AIIP…VDLA, WAPI…ALQW, LAIS…LISW, PIGE…LLCG, LISV…LSGY, LLVG…LYGL, FITS…IAAV, PTPV…AFAI, LLFT…ALAQ, MLAY…VSGT, VLYL…VILF, LGLS…GFFG, and LLVI…ISVI.

It belongs to the complex I subunit 2 family. As to quaternary structure, NDH-1 can be composed of about 15 different subunits; different subcomplexes with different compositions have been identified which probably have different functions.

The protein localises to the cellular thylakoid membrane. It catalyses the reaction a plastoquinone + NADH + (n+1) H(+)(in) = a plastoquinol + NAD(+) + n H(+)(out). The catalysed reaction is a plastoquinone + NADPH + (n+1) H(+)(in) = a plastoquinol + NADP(+) + n H(+)(out). NDH-1 shuttles electrons from an unknown electron donor, via FMN and iron-sulfur (Fe-S) centers, to quinones in the respiratory and/or the photosynthetic chain. The immediate electron acceptor for the enzyme in this species is believed to be plastoquinone. Couples the redox reaction to proton translocation, and thus conserves the redox energy in a proton gradient. Cyanobacterial NDH-1 also plays a role in inorganic carbon-concentration. The protein is NAD(P)H-quinone oxidoreductase subunit 2 of Prochlorococcus marinus (strain MIT 9215).